The following is a 330-amino-acid chain: Probable L-asparaginase (330 aa).

Residues 6 to 330 (PTIALLATGG…EKIQEMFEEY (325 aa)) form the Asparaginase/glutaminase domain. Thr16 functions as the O-isoaspartyl threonine intermediate in the catalytic mechanism. Residues Ser62 and 95 to 96 (TD) contribute to the substrate site.

Belongs to the asparaginase 1 family.

The protein resides in the cytoplasm. The catalysed reaction is L-asparagine + H2O = L-aspartate + NH4(+). The sequence is that of Probable L-asparaginase (ansA) from Helicobacter pylori (strain ATCC 700392 / 26695) (Campylobacter pylori).